Reading from the N-terminus, the 590-residue chain is Suprabasin (590 aa).

Residues 1-25 (MHLARLVGSCSLLLLLGALSGWAAS) form the signal peptide. Disordered stretches follow at residues 182-213 (GNEAGRFGQGVHHAAGQAGNEAGRFGQGAHHG), 242-266 (FGQGAHHAAGQAGNEAGRFGQGVHH), 297-338 (GQGA…GVHH), and 545-570 (LNGNHQSGSSSHQGGATTTPLASGAS). Low complexity-rich tracts occupy residues 190–200 (QGVHHAAGQAG), 243–254 (GQGAHHAAGQAG), 297–330 (GQGAHHAAGQAGNEAGRFGQGAHHAAGQAGNEAG), and 546–559 (NGNHQSGSSSHQGG). Residues 560-570 (ATTTPLASGAS) are compositionally biased toward polar residues.

As to expression, detected in thymus, uterus and esophagus.

The protein resides in the secreted. The sequence is that of Suprabasin (SBSN) from Homo sapiens (Human).